A 406-amino-acid polypeptide reads, in one-letter code: Peptidase T (406 aa).

Zn(2+) is bound at residue His-82. The active site involves Asp-84. Asp-142 serves as a coordination point for Zn(2+). Residue Glu-176 is the Proton acceptor of the active site. 3 residues coordinate Zn(2+): Glu-177, Asp-199, and His-381.

This sequence belongs to the peptidase M20B family. The cofactor is Zn(2+).

The protein localises to the cytoplasm. The catalysed reaction is Release of the N-terminal residue from a tripeptide.. Its function is as follows. Cleaves the N-terminal amino acid of tripeptides. In Streptococcus agalactiae serotype V (strain ATCC BAA-611 / 2603 V/R), this protein is Peptidase T.